Reading from the N-terminus, the 149-residue chain is 3-dehydroquinate dehydratase (149 aa).

Tyr24 functions as the Proton acceptor in the catalytic mechanism. Positions 75, 81, and 88 each coordinate substrate. The Proton donor role is filled by His101. Substrate is bound by residues 102 to 103 (IS) and Arg112.

The protein belongs to the type-II 3-dehydroquinase family. As to quaternary structure, homododecamer.

The catalysed reaction is 3-dehydroquinate = 3-dehydroshikimate + H2O. Its pathway is metabolic intermediate biosynthesis; chorismate biosynthesis; chorismate from D-erythrose 4-phosphate and phosphoenolpyruvate: step 3/7. Functionally, catalyzes a trans-dehydration via an enolate intermediate. This chain is 3-dehydroquinate dehydratase, found in Methylobacterium radiotolerans (strain ATCC 27329 / DSM 1819 / JCM 2831 / NBRC 15690 / NCIMB 10815 / 0-1).